Here is a 307-residue protein sequence, read N- to C-terminus: Probable GTP 3',8-cyclase (307 aa).

The Radical SAM core domain maps to 5–227 (AYGRRISSLR…RRTKYYLGGA (223 aa)). Arg14 contacts GTP. Cys21 and Cys25 together coordinate [4Fe-4S] cluster. Tyr27 contacts S-adenosyl-L-methionine. Cys28 serves as a coordination point for [4Fe-4S] cluster. Position 61 (Lys61) interacts with GTP. Residue Gly65 participates in S-adenosyl-L-methionine binding. Residue Thr89 coordinates GTP. Ser113 lines the S-adenosyl-L-methionine pocket. Lys151 contributes to the GTP binding site. Cys241 and Cys244 together coordinate [4Fe-4S] cluster. GTP is bound at residue 246–248 (RLR). Cys258 contributes to the [4Fe-4S] cluster binding site.

Belongs to the radical SAM superfamily. MoaA family. [4Fe-4S] cluster is required as a cofactor.

It catalyses the reaction GTP + AH2 + S-adenosyl-L-methionine = (8S)-3',8-cyclo-7,8-dihydroguanosine 5'-triphosphate + 5'-deoxyadenosine + L-methionine + A + H(+). It participates in cofactor biosynthesis; molybdopterin biosynthesis. Catalyzes the cyclization of GTP to (8S)-3',8-cyclo-7,8-dihydroguanosine 5'-triphosphate. This is Probable GTP 3',8-cyclase from Methanocella arvoryzae (strain DSM 22066 / NBRC 105507 / MRE50).